Here is a 210-residue protein sequence, read N- to C-terminus: MAKDPQTPTDEELARAERDAEPQPGDATDDEVELEGVVEDVEASEADAEALENPEADALAARVEELEQALADAKDQTARAAAEAQNVRRRAEQDVEKARKFALEKFVKELLPVVDSLEKALESMQEGASEVHREGVSMTLKLQLDVLAKFGVEAVDPQGEPFDPQVHEAMTMVPNPEVEPNTVIEVMQKGYLLNGRLVRPAMVVVSQAAN.

The disordered stretch occupies residues 1–31 (MAKDPQTPTDEELARAERDAEPQPGDATDDE). The segment covering 12-21 (ELARAERDAE) has biased composition (basic and acidic residues).

The protein belongs to the GrpE family. Homodimer.

The protein resides in the cytoplasm. In terms of biological role, participates actively in the response to hyperosmotic and heat shock by preventing the aggregation of stress-denatured proteins, in association with DnaK and GrpE. It is the nucleotide exchange factor for DnaK and may function as a thermosensor. Unfolded proteins bind initially to DnaJ; upon interaction with the DnaJ-bound protein, DnaK hydrolyzes its bound ATP, resulting in the formation of a stable complex. GrpE releases ADP from DnaK; ATP binding to DnaK triggers the release of the substrate protein, thus completing the reaction cycle. Several rounds of ATP-dependent interactions between DnaJ, DnaK and GrpE are required for fully efficient folding. The protein is Protein GrpE of Chromohalobacter salexigens (strain ATCC BAA-138 / DSM 3043 / CIP 106854 / NCIMB 13768 / 1H11).